Here is a 154-residue protein sequence, read N- to C-terminus: 6,7-dimethyl-8-ribityllumazine synthase (154 aa).

Residues tryptophan 22, serine 56–glutamate 58, and alanine 80–isoleucine 82 contribute to the 5-amino-6-(D-ribitylamino)uracil site. Aspartate 85 to threonine 86 contributes to the (2S)-2-hydroxy-3-oxobutyl phosphate binding site. Histidine 88 (proton donor) is an active-site residue. Residue phenylalanine 113 coordinates 5-amino-6-(D-ribitylamino)uracil. Arginine 127 lines the (2S)-2-hydroxy-3-oxobutyl phosphate pocket.

The protein belongs to the DMRL synthase family.

The enzyme catalyses (2S)-2-hydroxy-3-oxobutyl phosphate + 5-amino-6-(D-ribitylamino)uracil = 6,7-dimethyl-8-(1-D-ribityl)lumazine + phosphate + 2 H2O + H(+). It functions in the pathway cofactor biosynthesis; riboflavin biosynthesis; riboflavin from 2-hydroxy-3-oxobutyl phosphate and 5-amino-6-(D-ribitylamino)uracil: step 1/2. Functionally, catalyzes the formation of 6,7-dimethyl-8-ribityllumazine by condensation of 5-amino-6-(D-ribitylamino)uracil with 3,4-dihydroxy-2-butanone 4-phosphate. This is the penultimate step in the biosynthesis of riboflavin. The chain is 6,7-dimethyl-8-ribityllumazine synthase from Deinococcus geothermalis (strain DSM 11300 / CIP 105573 / AG-3a).